Reading from the N-terminus, the 267-residue chain is 5'-nucleotidase SurE (267 aa).

A divalent metal cation is bound by residues Asp-9, Asp-10, Ser-41, and Asn-95.

The protein belongs to the SurE nucleotidase family. The cofactor is a divalent metal cation.

The protein resides in the cytoplasm. The enzyme catalyses a ribonucleoside 5'-phosphate + H2O = a ribonucleoside + phosphate. In terms of biological role, nucleotidase that shows phosphatase activity on nucleoside 5'-monophosphates. The protein is 5'-nucleotidase SurE of Aeropyrum pernix (strain ATCC 700893 / DSM 11879 / JCM 9820 / NBRC 100138 / K1).